The sequence spans 476 residues: 3-isopropylmalate dehydratase large subunit (476 aa).

Residues cysteine 357, cysteine 417, and cysteine 420 each contribute to the [4Fe-4S] cluster site.

It belongs to the aconitase/IPM isomerase family. LeuC type 1 subfamily. As to quaternary structure, heterodimer of LeuC and LeuD. [4Fe-4S] cluster serves as cofactor.

The catalysed reaction is (2R,3S)-3-isopropylmalate = (2S)-2-isopropylmalate. It participates in amino-acid biosynthesis; L-leucine biosynthesis; L-leucine from 3-methyl-2-oxobutanoate: step 2/4. Functionally, catalyzes the isomerization between 2-isopropylmalate and 3-isopropylmalate, via the formation of 2-isopropylmaleate. This chain is 3-isopropylmalate dehydratase large subunit, found in Mycobacterium leprae (strain TN).